A 102-amino-acid chain; its full sequence is Acid shock protein (102 aa).

A signal peptide spans 1 to 21; sequence MKKVLALVVAAAMGLSSAAFA. The segment covering 22–41 has biased composition (low complexity); it reads AETATTPAPTATTTKAAPAK. The propeptide occupies 22-58; it reads AETATTPAPTATTTKAAPAKTTHHKKQHKAAPAQKAQ. Residues 22–102 are disordered; it reads AETATTPAPT…PAKPAAQPAA (81 aa). The segment covering 80-90 has biased composition (basic residues); that stretch reads AAKKHAKKHSH. Low complexity predominate over residues 91–102; that stretch reads QQPAKPAAQPAA.

It belongs to the Asr family. In terms of processing, proteolytic processing gives rise to the active protein.

The protein localises to the periplasm. Functionally, required for growth and/or survival at acidic conditions. This is Acid shock protein from Escherichia coli O45:K1 (strain S88 / ExPEC).